We begin with the raw amino-acid sequence, 174 residues long: Eukaryotic translation elongation factor 1 epsilon-1 (174 aa).

Alanine 2 carries the post-translational modification N-acetylalanine. Residues alanine 2 to serine 56 form an N-terminal region. The 124-residue stretch at histidine 50–serine 173 folds into the GST C-terminal domain. The linker stretch occupies residues lysine 57 to serine 63. The segment at threonine 64–tyrosine 152 is C-terminal. Lysine 138 is modified (N6-acetyllysine). Residues proline 153–leucine 169 are a coiled coil.

In terms of assembly, part of a multisubunit complex that groups tRNA ligases for Arg (RARS1), Asp (DARS1), Gln (QARS1), Ile (IARS1), Leu (LARS1), Lys (KARS1), Met (MARS1) the bifunctional ligase for Glu and Pro (EPRS1) and the auxiliary subunits AIMP1/p43, AIMP2/p38 and EEF1E1/p18. Can interact simultaneously with MARS1 and EPRS1. Forms a linear complex that contains MARS1, EEF1E1, EPRS1 and AIMP2 that is at the core of the multisubunit complex. Interacts with ATM and ATR. The interaction with ATM, which takes place independently of TP53, is induced by DNA damage that may occur during genotoxic stress or cell growth. The interaction with ATR is enhanced by UV irradiation.

The protein resides in the cytoplasm. It localises to the nucleus. Functionally, positive modulator of ATM response to DNA damage. This Cricetulus griseus (Chinese hamster) protein is Eukaryotic translation elongation factor 1 epsilon-1 (EEF1E1).